Consider the following 496-residue polypeptide: UDP-glycosyltransferase 73C3 (496 aa).

Residues Ser-297, 357–359, 374–382, and 396–399 each bind UDP-alpha-D-glucose; these read APQ, HCGWNSTLE, and FGDQ.

This sequence belongs to the UDP-glycosyltransferase family.

This chain is UDP-glycosyltransferase 73C3 (UGT73C3), found in Arabidopsis thaliana (Mouse-ear cress).